Here is a 685-residue protein sequence, read N- to C-terminus: Protein snwA (685 aa).

Disordered regions lie at residues 1-62, 88-112, 347-573, and 605-685; these read MTSL…GYLP, RKGKSKSSNSNTSNMNGGGTTTSIV, LAED…DSIY, and AVSN…SKKR. Low complexity-rich tracts occupy residues 30 to 41 and 93 to 102; these read PQQQKQQQQQQQ and KSSNSNTSNM. An SNW region spans residues 194–360; the sequence is ATYIKYTPSN…VRNERSGIIQ (167 aa). Acidic residues predominate over residues 370–381; sequence DSDNDNDNDSSS. Residues 399–494 are compositionally biased toward basic and acidic residues; the sequence is RSTERIPSRN…DRYSKRRSDS (96 aa). Over residues 495–507 the composition is skewed to acidic residues; the sequence is DSDSDSDSSDSED. The span at 508–556 shows a compositional bias: basic and acidic residues; sequence ERVRRERKEKLERDKIRMEKKRELEREYRLEASGKKSKFNRDQDRDISE. The segment covering 618 to 631 has biased composition (polar residues); the sequence is EDNTSIQDVLSNSR. The segment covering 646 to 685 has biased composition (basic and acidic residues); that stretch reads PNKEFSGTDRSKDRTGPVAFEKEKKKSDDPFGFDDFSKKR.

This sequence belongs to the SNW family. In terms of assembly, interacts with cypE.

The protein resides in the nucleus. The polypeptide is Protein snwA (snwA) (Dictyostelium discoideum (Social amoeba)).